We begin with the raw amino-acid sequence, 260 residues long: Uroplakin-1b (260 aa).

Topologically, residues 1 to 15 (MAKDDSTVRCFQGLL) are cytoplasmic. A helical transmembrane segment spans residues 16–36 (IFGHVIVGMCGIALTAECIFF). Topologically, residues 37–59 (VSDQHSLYPLLEATNNDDIFGAA) are extracellular. The chain crosses the membrane as a helical span at residues 60-80 (WIGMFVGICLFCLSVLAIVGI). The Cytoplasmic segment spans residues 81 to 86 (MKSNRK). The helical transmembrane segment at 87 to 107 (ILLAYFIMMFIVYGFEVASCI) threads the bilayer. Residues 108–229 (TAATQRDFFT…ELISGPMDRH (122 aa)) lie on the Extracellular side of the membrane. Residues 230 to 250 (AWGVAWFGFAILCWTFWVLLG) traverse the membrane as a helical segment. At 251–260 (TMFYWSRIEY) the chain is on the cytoplasmic side.

This sequence belongs to the tetraspanin (TM4SF) family. Heterodimer with uroplakin-3A (UPK3A) or uroplakin-3B (UPK3B). N-glycosylated with high-mannose oligosaccharides. As to expression, bladder epithelium.

The protein resides in the membrane. Its function is as follows. Component of the asymmetric unit membrane (AUM); a highly specialized biomembrane elaborated by terminally differentiated urothelial cells. May play an important role in normal bladder epithelial physiology, possibly in regulating membrane permeability of superficial umbrella cells or in stabilizing the apical membrane through AUM/cytoskeletal interactions. The protein is Uroplakin-1b (Upk1b) of Mus musculus (Mouse).